The primary structure comprises 122 residues: ATP-dependent Clp protease adapter protein ClpS (122 aa).

A disordered region spans residues 1–33 (MHAPSQIRLTFNQDHPEPHEHEDEGAGLAVQES). Residues 14-24 (DHPEPHEHEDE) show a composition bias toward basic and acidic residues.

This sequence belongs to the ClpS family. Binds to the N-terminal domain of the chaperone ClpA.

Functionally, involved in the modulation of the specificity of the ClpAP-mediated ATP-dependent protein degradation. This is ATP-dependent Clp protease adapter protein ClpS from Pseudomonas aeruginosa (strain ATCC 15692 / DSM 22644 / CIP 104116 / JCM 14847 / LMG 12228 / 1C / PRS 101 / PAO1).